The primary structure comprises 205 residues: Adenylyl-sulfate kinase (205 aa).

31–38 (GLSGAGKS) is a binding site for ATP. The active-site Phosphoserine intermediate is the S105.

Belongs to the APS kinase family.

The catalysed reaction is adenosine 5'-phosphosulfate + ATP = 3'-phosphoadenylyl sulfate + ADP + H(+). It participates in sulfur metabolism; hydrogen sulfide biosynthesis; sulfite from sulfate: step 2/3. Its function is as follows. Catalyzes the synthesis of activated sulfate. This is Adenylyl-sulfate kinase from Shewanella putrefaciens (strain CN-32 / ATCC BAA-453).